A 382-amino-acid chain; its full sequence is 1-deoxy-D-xylulose 5-phosphate reductoisomerase (382 aa).

Positions 10, 11, 12, 13, 38, and 120 each coordinate NADPH. Lys121 is a binding site for 1-deoxy-D-xylulose 5-phosphate. Glu122 is an NADPH binding site. Asp146 provides a ligand contact to Mn(2+). 4 residues coordinate 1-deoxy-D-xylulose 5-phosphate: Ser147, Glu148, Ser172, and His195. Residue Glu148 participates in Mn(2+) binding. Gly201 is a binding site for NADPH. 1-deoxy-D-xylulose 5-phosphate contacts are provided by Ser208, Asn213, Lys214, and Glu217. Glu217 contacts Mn(2+).

The protein belongs to the DXR family. Mg(2+) serves as cofactor. It depends on Mn(2+) as a cofactor.

It carries out the reaction 2-C-methyl-D-erythritol 4-phosphate + NADP(+) = 1-deoxy-D-xylulose 5-phosphate + NADPH + H(+). The protein operates within isoprenoid biosynthesis; isopentenyl diphosphate biosynthesis via DXP pathway; isopentenyl diphosphate from 1-deoxy-D-xylulose 5-phosphate: step 1/6. In terms of biological role, catalyzes the NADPH-dependent rearrangement and reduction of 1-deoxy-D-xylulose-5-phosphate (DXP) to 2-C-methyl-D-erythritol 4-phosphate (MEP). The sequence is that of 1-deoxy-D-xylulose 5-phosphate reductoisomerase from Thermoanaerobacter pseudethanolicus (strain ATCC 33223 / 39E) (Clostridium thermohydrosulfuricum).